We begin with the raw amino-acid sequence, 660 residues long: Threonine--tRNA ligase (660 aa).

One can recognise a TGS domain in the interval 1–49 (MPINEIRVQKGQRYRDAINDKKVIAVKKGDKFLDLDEIAGEDEAVQPVY). The catalytic stretch occupies residues 225–554 (DHRKIIAEMD…LLEHFAGKLP (330 aa)). Residues cysteine 318, histidine 369, and histidine 531 each contribute to the Zn(2+) site.

It belongs to the class-II aminoacyl-tRNA synthetase family. Homodimer. The cofactor is Zn(2+).

The protein localises to the cytoplasm. The catalysed reaction is tRNA(Thr) + L-threonine + ATP = L-threonyl-tRNA(Thr) + AMP + diphosphate + H(+). Functionally, catalyzes the attachment of threonine to tRNA(Thr) in a two-step reaction: L-threonine is first activated by ATP to form Thr-AMP and then transferred to the acceptor end of tRNA(Thr). The sequence is that of Threonine--tRNA ligase from Thermoplasma volcanium (strain ATCC 51530 / DSM 4299 / JCM 9571 / NBRC 15438 / GSS1).